Here is a 130-residue protein sequence, read N- to C-terminus: Small ribosomal subunit protein uS9 (130 aa).

This sequence belongs to the universal ribosomal protein uS9 family.

This is Small ribosomal subunit protein uS9 from Shewanella amazonensis (strain ATCC BAA-1098 / SB2B).